A 375-amino-acid polypeptide reads, in one-letter code: Dehydrodolichyl diphosphate synthase complex subunit NUS1 (375 aa).

Positions 1–28 (MPTMIKKDDKAMEPPNEKPHRKIERDDV) are enriched in basic and acidic residues. Residues 1–48 (MPTMIKKDDKAMEPPNEKPHRKIERDDVPESSNHIPPPESGVLKGGKV) are disordered. A helical membrane pass occupies residues 97 to 119 (YLFYKFLLVLLYICFGLFRYGQY).

Belongs to the UPP synthase family. Forms an active dehydrodolichyl diphosphate synthase complex with either SRT1 or RER2. It depends on Mg(2+) as a cofactor.

It localises to the endoplasmic reticulum membrane. Its subcellular location is the lipid droplet. The protein localises to the nucleus membrane. It carries out the reaction n isopentenyl diphosphate + (2E,6E)-farnesyl diphosphate = a di-trans,poly-cis-polyprenyl diphosphate + n diphosphate. Its pathway is protein modification; protein glycosylation. Its function is as follows. With SRT1 or RER2, forms the dehydrodolichyl diphosphate synthase (DDS) complex, an essential component of the dolichol monophosphate (Dol-P) biosynthetic machinery. Adds multiple copies of isopentenyl pyrophosphate (IPP) to farnesyl pyrophosphate (FPP) to produce dehydrodolichyl diphosphate (Dedol-PP), a precursor of dolichol which is utilized as a sugar carrier in protein glycosylation in the endoplasmic reticulum (ER). In Saccharomyces cerevisiae (strain ATCC 204508 / S288c) (Baker's yeast), this protein is Dehydrodolichyl diphosphate synthase complex subunit NUS1 (NUS1).